Reading from the N-terminus, the 301-residue chain is Pyridoxal 5'-phosphate synthase subunit PdxS (301 aa).

Asp31 is a binding site for D-ribose 5-phosphate. The active-site Schiff-base intermediate with D-ribose 5-phosphate is Lys88. Gly160 lines the D-ribose 5-phosphate pocket. Arg172 lines the D-glyceraldehyde 3-phosphate pocket. D-ribose 5-phosphate is bound by residues Gly221 and 242–243; that span reads GS. The tract at residues 273–301 is disordered; sequence EIAKSPGKGMKGQANETLPEEEKLQDRGI. Basic and acidic residues predominate over residues 292-301; that stretch reads EEEKLQDRGI.

Belongs to the PdxS/SNZ family. In terms of assembly, in the presence of PdxT, forms a dodecamer of heterodimers.

The catalysed reaction is aldehydo-D-ribose 5-phosphate + D-glyceraldehyde 3-phosphate + L-glutamine = pyridoxal 5'-phosphate + L-glutamate + phosphate + 3 H2O + H(+). The protein operates within cofactor biosynthesis; pyridoxal 5'-phosphate biosynthesis. In terms of biological role, catalyzes the formation of pyridoxal 5'-phosphate from ribose 5-phosphate (RBP), glyceraldehyde 3-phosphate (G3P) and ammonia. The ammonia is provided by the PdxT subunit. Can also use ribulose 5-phosphate and dihydroxyacetone phosphate as substrates, resulting from enzyme-catalyzed isomerization of RBP and G3P, respectively. The sequence is that of Pyridoxal 5'-phosphate synthase subunit PdxS from Natronomonas pharaonis (strain ATCC 35678 / DSM 2160 / CIP 103997 / JCM 8858 / NBRC 14720 / NCIMB 2260 / Gabara) (Halobacterium pharaonis).